Consider the following 608-residue polypeptide: Chaperone protein HtpG (608 aa).

The tract at residues 1 to 332 (MQFQTEVNQL…VEDLPLNVSR (332 aa)) is a; substrate-binding. Positions 333–536 (EILQENQILK…KNKLDFAMQQ (204 aa)) are b. The c stretch occupies residues 537–608 (LLKQMGQEQN…LTKIINKAFS (72 aa)).

The protein belongs to the heat shock protein 90 family. As to quaternary structure, homodimer.

Its subcellular location is the cytoplasm. Its function is as follows. Molecular chaperone. Has ATPase activity. In Campylobacter jejuni subsp. doylei (strain ATCC BAA-1458 / RM4099 / 269.97), this protein is Chaperone protein HtpG.